A 214-amino-acid chain; its full sequence is Thymidylate kinase (214 aa).

An ATP-binding site is contributed by Gly10–Ser17.

This sequence belongs to the thymidylate kinase family.

It catalyses the reaction dTMP + ATP = dTDP + ADP. Its function is as follows. Phosphorylation of dTMP to form dTDP in both de novo and salvage pathways of dTTP synthesis. The chain is Thymidylate kinase from Brucella abortus (strain S19).